Reading from the N-terminus, the 120-residue chain is NAD(P)H-quinone oxidoreductase subunit 3, chloroplastic (120 aa).

Transmembrane regions (helical) follow at residues 9 to 29, 64 to 84, and 88 to 108; these read IFWAFLMISSVIPILAFLISG, MFALVFVVFDVETVFLYPWAM, and VLGVSVFIEALIFVLIPIVGS.

Belongs to the complex I subunit 3 family. NDH is composed of at least 16 different subunits, 5 of which are encoded in the nucleus.

It localises to the plastid. The protein resides in the chloroplast thylakoid membrane. It carries out the reaction a plastoquinone + NADH + (n+1) H(+)(in) = a plastoquinol + NAD(+) + n H(+)(out). The catalysed reaction is a plastoquinone + NADPH + (n+1) H(+)(in) = a plastoquinol + NADP(+) + n H(+)(out). In terms of biological role, NDH shuttles electrons from NAD(P)H:plastoquinone, via FMN and iron-sulfur (Fe-S) centers, to quinones in the photosynthetic chain and possibly in a chloroplast respiratory chain. The immediate electron acceptor for the enzyme in this species is believed to be plastoquinone. Couples the redox reaction to proton translocation, and thus conserves the redox energy in a proton gradient. The sequence is that of NAD(P)H-quinone oxidoreductase subunit 3, chloroplastic from Amborella trichopoda.